Consider the following 512-residue polypeptide: GMP synthase [glutamine-hydrolyzing] (512 aa).

The Glutamine amidotransferase type-1 domain occupies 3 to 196 (NILILDFGSQ…VKHICQASET (194 aa)). Residue Cys80 is the Nucleophile of the active site. Residues His169 and Glu171 contribute to the active site. The GMPS ATP-PPase domain maps to 197–387 (WKIETIEKQL…LGLPDVLISR (191 aa)). 225–231 (SGGVDSS) lines the ATP pocket.

In terms of assembly, homodimer.

The catalysed reaction is XMP + L-glutamine + ATP + H2O = GMP + L-glutamate + AMP + diphosphate + 2 H(+). Its pathway is purine metabolism; GMP biosynthesis; GMP from XMP (L-Gln route): step 1/1. Its function is as follows. Catalyzes the synthesis of GMP from XMP. This Chlamydia caviae (strain ATCC VR-813 / DSM 19441 / 03DC25 / GPIC) (Chlamydophila caviae) protein is GMP synthase [glutamine-hydrolyzing].